A 548-amino-acid polypeptide reads, in one-letter code: Membrane protein insertase YidC (548 aa).

The helical transmembrane segment at asparagine 6–aspartate 26 threads the bilayer. Residues asparagine 28–glycine 56 are disordered. Over residues proline 29–threonine 42 the composition is skewed to low complexity. 4 helical membrane-spanning segments follow: residues phenylalanine 350–tyrosine 370, phenylalanine 424–isoleucine 444, leucine 458–isoleucine 478, and proline 499–valine 519.

The protein belongs to the OXA1/ALB3/YidC family. Type 1 subfamily. In terms of assembly, interacts with the Sec translocase complex via SecD. Specifically interacts with transmembrane segments of nascent integral membrane proteins during membrane integration.

Its subcellular location is the cell inner membrane. Functionally, required for the insertion and/or proper folding and/or complex formation of integral membrane proteins into the membrane. Involved in integration of membrane proteins that insert both dependently and independently of the Sec translocase complex, as well as at least some lipoproteins. Aids folding of multispanning membrane proteins. This chain is Membrane protein insertase YidC, found in Salmonella typhimurium (strain LT2 / SGSC1412 / ATCC 700720).